Here is a 512-residue protein sequence, read N- to C-terminus: MPIVAYDPDKVREADRAAVRMGVPGGILMENAGAAAASVIWDRFRPTGRVVILCGPGNNGGDGFVVARHLMIRGAEVVVLSTSVDRRGDSKAAEDMYLACGGRVLASSEVSDPEVSDLLGGACLVVDALLGTGSGGEIRGQVARLVELLLETYSGPLVALDMPTGFHGRTGVSLGVGVRADLTVTFLAPKSGAMFTPAFDHVGEMVVSPIGVPPRLVLPQRADVVGVGYEDLSHMRLPMWPGQNKSHRGMVAVLGGSGMFGGAPFLSAMGALCGGAGWVVCGVPSQWAPTYGHLVPESMVLPLPSDGRGDLTSEAWDVIASSYGDRIRCLVLGPGMGRGEGASSLVRRVLSSWDGPLVLDADGLRILADTGLPREARCSLWITPHEGEAACLLGTSSRWVVENRRDAAEALASRFGGVVLKGRNSVVMRGEALSVVCAGHPNLSVPGSGDVLAGIIGASIARMGDVEEAVCLAVILHGVAGERLASSGRADGILAREIAHQAALVLGGLGDV.

The segment at 1 to 220 is NAD(P)H-hydrate epimerase; that stretch reads MPIVAYDPDK…GVPPRLVLPQ (220 aa). The YjeF N-terminal domain maps to 11–218; sequence VREADRAAVR…PIGVPPRLVL (208 aa). Residues 58–62 are NADPHX 1; for epimerase activity; the sequence is NNGGD. Positions 59 and 127 each coordinate K(+). Residues 131-137 form an NADPHX 1; for epimerase activity region; the sequence is GTGSGGE. Position 161 (Asp-161) interacts with (6S)-NADPHX. Thr-164 serves as a coordination point for K(+). The YjeF C-terminal domain occupies 228 to 509; it reads GYEDLSHMRL…HQAALVLGGL (282 aa). The interval 228 to 512 is ADP-dependent (S)-NAD(P)H-hydrate dehydratase; it reads GYEDLSHMRL…ALVLGGLGDV (285 aa). Gly-335 provides a ligand contact to (6S)-NADPHX. The interval 385–391 is NADPHX 2; for dehydratase activity; sequence HEGEAAC. Residues 421-425 and 440-449 each bind ADP; these read KGRNS and HPNLSVPGSG. Asp-450 is a binding site for (6S)-NADPHX.

In the N-terminal section; belongs to the NnrE/AIBP family. This sequence in the C-terminal section; belongs to the NnrD/CARKD family. It depends on K(+) as a cofactor.

It catalyses the reaction (6S)-NADHX + ADP = AMP + phosphate + NADH + H(+). The catalysed reaction is (6S)-NADPHX + ADP = AMP + phosphate + NADPH + H(+). It carries out the reaction (6R)-NADHX = (6S)-NADHX. The enzyme catalyses (6R)-NADPHX = (6S)-NADPHX. Functionally, bifunctional enzyme that catalyzes the epimerization of the S- and R-forms of NAD(P)HX and the dehydration of the S-form of NAD(P)HX at the expense of ADP, which is converted to AMP. This allows the repair of both epimers of NAD(P)HX, a damaged form of NAD(P)H that is a result of enzymatic or heat-dependent hydration. The chain is Bifunctional NAD(P)H-hydrate repair enzyme Nnr (nnr) from Thermanaerovibrio acidaminovorans (strain ATCC 49978 / DSM 6589 / Su883) (Selenomonas acidaminovorans).